The primary structure comprises 465 residues: Nuclear pore complex protein NUP50B (465 aa).

2 disordered regions span residues Met-1–Thr-44 and Arg-59–His-244. Gly-2 carries the N-acetylglycine modification. A compositionally biased stretch (acidic residues) spans Gly-26–Ser-35. Over residues Pro-81–Pro-97 the composition is skewed to low complexity. 3 stretches are compositionally biased toward basic and acidic residues: residues Thr-105 to Ala-127, Ile-141 to Ser-157, and Thr-216 to Gly-233. Residue Ser-125 is modified to Phosphoserine. 3 repeat units span residues Phe-266–Gly-267, Phe-286–Gly-287, and Phe-297–Gly-298. Residues Phe-266–Gly-298 are 3 X 2 AA repeats of F-G. Disordered stretches follow at residues Lys-308–Asn-330 and His-439–Ala-465. Thr-455 is subject to Phosphothreonine. Polar residues predominate over residues Pro-456–Ala-465. Position 459 is a phosphoserine (Ser-459).

Part of the nuclear pore complex (NPC). The NPC has an eight-fold symmetrical structure comprising a central transport channel and two rings, the cytoplasmic and nuclear rings, to which eight filaments are attached. The cytoplasmic filaments have loose ends, while the nuclear filaments are joined in a distal ring, forming a nuclear basket. NPCs are highly dynamic in configuration and composition, and can be devided in 3 subcomplexes, the NUP62 subcomplex, the NUP107-160 subcomplex and the NUP93 subcomplex, containing approximately 30 different nucleoporin proteins.

Its subcellular location is the nucleus. The protein localises to the nucleoplasm. It localises to the nuclear pore complex. Probably involved in nucleocytoplasmic transport via its interactions with importins and Ran, rather than by forming part of the nuclear pore complex (NPC) scaffolding. This is Nuclear pore complex protein NUP50B from Arabidopsis thaliana (Mouse-ear cress).